A 388-amino-acid chain; its full sequence is Succinate--CoA ligase [ADP-forming] subunit beta (388 aa).

In terms of domain architecture, ATP-grasp spans 9-244 (KQLFAEFGLP…PSQEDKREAH (236 aa)). ATP contacts are provided by residues K46, 53 to 55 (GRG), E99, S102, and E107. Residues N199 and D213 each contribute to the Mg(2+) site. Substrate-binding positions include N264 and 321-323 (GIV).

The protein belongs to the succinate/malate CoA ligase beta subunit family. As to quaternary structure, heterotetramer of two alpha and two beta subunits. It depends on Mg(2+) as a cofactor.

The catalysed reaction is succinate + ATP + CoA = succinyl-CoA + ADP + phosphate. It catalyses the reaction GTP + succinate + CoA = succinyl-CoA + GDP + phosphate. Its pathway is carbohydrate metabolism; tricarboxylic acid cycle; succinate from succinyl-CoA (ligase route): step 1/1. In terms of biological role, succinyl-CoA synthetase functions in the citric acid cycle (TCA), coupling the hydrolysis of succinyl-CoA to the synthesis of either ATP or GTP and thus represents the only step of substrate-level phosphorylation in the TCA. The beta subunit provides nucleotide specificity of the enzyme and binds the substrate succinate, while the binding sites for coenzyme A and phosphate are found in the alpha subunit. This Vibrio vulnificus (strain YJ016) protein is Succinate--CoA ligase [ADP-forming] subunit beta.